The primary structure comprises 290 residues: OTU domain-containing protein 6A (290 aa).

Residues 27 to 117 (QTLKASVPKN…RRHQERMPAA (91 aa)) are disordered. The segment covering 49 to 68 (SRLEAEMEQRHKQELEKFGE) has biased composition (basic and acidic residues). A compositionally biased stretch (basic residues) spans 95–108 (KAQKRRDRRAHQER). In terms of domain architecture, OTU spans 142–276 (LEMKTIPADG…GEHYNSVKPI (135 aa)). The interval 147 to 153 (IPADGHC) is cys-loop. Aspartate 150 is a catalytic residue. Cysteine 153 serves as the catalytic Nucleophile. The segment at 211–221 (IVHNASWGGQL) is variable-loop. A his-loop region spans residues 259 to 269 (YLHYACDFGEH). Residue histidine 269 is part of the active site.

The enzyme catalyses Thiol-dependent hydrolysis of ester, thioester, amide, peptide and isopeptide bonds formed by the C-terminal Gly of ubiquitin (a 76-residue protein attached to proteins as an intracellular targeting signal).. Its function is as follows. Deubiquitinating enzyme that hydrolyzes 'Lys-27'-, 'Lys-29'- and 'Lys-33'-linked polyubiquitin chains. Also able to hydrolyze 'Lys-11'-linked ubiquitin chains. The chain is OTU domain-containing protein 6A (Otud6a) from Mus musculus (Mouse).